The following is a 146-amino-acid chain: Fluoride-specific ion channel FluC (146 aa).

Transmembrane regions (helical) follow at residues 8-28 (FAIA…TLTV), 47-67 (LANL…QALV), 91-111 (IGVL…AVFA), and 121-141 (MLLG…AAVV). Positions 95 and 98 each coordinate Na(+).

This sequence belongs to the fluoride channel Fluc/FEX (TC 1.A.43) family.

The protein localises to the cell inner membrane. The catalysed reaction is fluoride(in) = fluoride(out). Its activity is regulated as follows. Na(+) is not transported, but it plays an essential structural role and its presence is essential for fluoride channel function. In terms of biological role, fluoride-specific ion channel. Important for reducing fluoride concentration in the cell, thus reducing its toxicity. This chain is Fluoride-specific ion channel FluC, found in Rhodopirellula baltica (strain DSM 10527 / NCIMB 13988 / SH1).